A 193-amino-acid chain; its full sequence is Protein Syd (193 aa).

The protein belongs to the Syd family.

Its subcellular location is the cell inner membrane. Interacts with the SecY protein in vivo. May bind preferentially to an uncomplexed state of SecY, thus functioning either as a chelating agent for excess SecY in the cell or as a regulatory factor that negatively controls the translocase function. In Tolumonas auensis (strain DSM 9187 / NBRC 110442 / TA 4), this protein is Protein Syd.